We begin with the raw amino-acid sequence, 345 residues long: D-erythrose-4-phosphate dehydrogenase (345 aa).

Residue 11–12 (RI) participates in NAD(+) binding. Substrate-binding positions include 158–160 (SCT), Arg-204, 217–218 (TK), and Arg-240. The active-site Nucleophile is Cys-159. Asn-322 contributes to the NAD(+) binding site.

The protein belongs to the glyceraldehyde-3-phosphate dehydrogenase family. Epd subfamily. In terms of assembly, homotetramer.

The protein resides in the cytoplasm. The catalysed reaction is D-erythrose 4-phosphate + NAD(+) + H2O = 4-phospho-D-erythronate + NADH + 2 H(+). Its pathway is cofactor biosynthesis; pyridoxine 5'-phosphate biosynthesis; pyridoxine 5'-phosphate from D-erythrose 4-phosphate: step 1/5. Catalyzes the NAD-dependent conversion of D-erythrose 4-phosphate to 4-phosphoerythronate. This chain is D-erythrose-4-phosphate dehydrogenase, found in Vibrio campbellii (strain ATCC BAA-1116).